The following is a 108-amino-acid chain: ATP-dependent Clp protease adapter protein ClpS (108 aa).

This sequence belongs to the ClpS family. Binds to the N-terminal domain of the chaperone ClpA.

Its function is as follows. Involved in the modulation of the specificity of the ClpAP-mediated ATP-dependent protein degradation. The protein is ATP-dependent Clp protease adapter protein ClpS of Cupriavidus necator (strain ATCC 17699 / DSM 428 / KCTC 22496 / NCIMB 10442 / H16 / Stanier 337) (Ralstonia eutropha).